Here is a 184-residue protein sequence, read N- to C-terminus: Cytidylate kinase (184 aa).

8–16 contacts ATP; the sequence is GQPGSGKTT.

The protein belongs to the cytidylate kinase family. Type 2 subfamily.

Its subcellular location is the cytoplasm. The enzyme catalyses CMP + ATP = CDP + ADP. It carries out the reaction dCMP + ATP = dCDP + ADP. The chain is Cytidylate kinase from Pyrobaculum neutrophilum (strain DSM 2338 / JCM 9278 / NBRC 100436 / V24Sta) (Thermoproteus neutrophilus).